A 123-amino-acid polypeptide reads, in one-letter code: MRKPQRGYARQDRVKEQIMRELAELVRTGLKDPRAGFITVNEVEVTRDYSHATVFYTILNQDAREITEEVLEHARGHLRSELAKRIKLFKIPELHFKYDESLERGLNLSALIDQVAAEKPVED.

The protein belongs to the RbfA family. As to quaternary structure, monomer. Binds 30S ribosomal subunits, but not 50S ribosomal subunits or 70S ribosomes.

It localises to the cytoplasm. One of several proteins that assist in the late maturation steps of the functional core of the 30S ribosomal subunit. Associates with free 30S ribosomal subunits (but not with 30S subunits that are part of 70S ribosomes or polysomes). Required for efficient processing of 16S rRNA. May interact with the 5'-terminal helix region of 16S rRNA. The protein is Ribosome-binding factor A of Neisseria meningitidis serogroup C (strain 053442).